We begin with the raw amino-acid sequence, 229 residues long: uncharacterized protein (229 aa).

An S4 RNA-binding domain is found at 2-69; sequence QRLAKLISNA…KSRLWIYYKP (68 aa). Catalysis depends on D102, which acts as the Nucleophile.

Belongs to the pseudouridine synthase RsuA family.

It carries out the reaction a uridine in RNA = a pseudouridine in RNA. This is an uncharacterized protein from Rickettsia bellii (strain RML369-C).